A 597-amino-acid polypeptide reads, in one-letter code: Formate--tetrahydrofolate ligase (597 aa).

84–91 contributes to the ATP binding site; that stretch reads TPLGEGKS.

This sequence belongs to the formate--tetrahydrofolate ligase family.

The catalysed reaction is (6S)-5,6,7,8-tetrahydrofolate + formate + ATP = (6R)-10-formyltetrahydrofolate + ADP + phosphate. The protein operates within one-carbon metabolism; tetrahydrofolate interconversion. The protein is Formate--tetrahydrofolate ligase of Dehalococcoides mccartyi (strain CBDB1).